The sequence spans 356 residues: Phosphoribosylformylglycinamidine cyclo-ligase (356 aa).

Belongs to the AIR synthase family.

The protein resides in the cytoplasm. The catalysed reaction is 2-formamido-N(1)-(5-O-phospho-beta-D-ribosyl)acetamidine + ATP = 5-amino-1-(5-phospho-beta-D-ribosyl)imidazole + ADP + phosphate + H(+). Its pathway is purine metabolism; IMP biosynthesis via de novo pathway; 5-amino-1-(5-phospho-D-ribosyl)imidazole from N(2)-formyl-N(1)-(5-phospho-D-ribosyl)glycinamide: step 2/2. In Sinorhizobium medicae (strain WSM419) (Ensifer medicae), this protein is Phosphoribosylformylglycinamidine cyclo-ligase.